A 184-amino-acid polypeptide reads, in one-letter code: Large ribosomal subunit protein uL6 (184 aa).

It belongs to the universal ribosomal protein uL6 family. In terms of assembly, part of the 50S ribosomal subunit.

Functionally, this protein binds to the 23S rRNA, and is important in its secondary structure. It is located near the subunit interface in the base of the L7/L12 stalk, and near the tRNA binding site of the peptidyltransferase center. In Thermococcus onnurineus (strain NA1), this protein is Large ribosomal subunit protein uL6.